A 216-amino-acid chain; its full sequence is MASQLRVYVPEHPLIKHWLGVARDENTPPVLFKTAMGELGRWLTYEAARYWLPTVDTEVKTPLAIAKASLIDPQTPFVIVPILRAGLALVEGAQGLLPLAKIYHLGLVRNETTLEPSLYLNKLPERFAPGTHLLLLDPMLATGNTIMAALDLLMARDIDANLIRLVSVVAAPTALQKLSNAHPNLTIYTAMIDEQLNDRGYIVPGLGDAGDRCFGT.

5-phospho-alpha-D-ribose 1-diphosphate contacts are provided by residues Arg84, Arg109, and 137–145; that span reads DPMLATGNT. Residues Ile202 and 207 to 209 contribute to the uracil site; that span reads GDA. A 5-phospho-alpha-D-ribose 1-diphosphate-binding site is contributed by Asp208.

This sequence belongs to the UPRTase family. Requires Mg(2+) as cofactor.

It carries out the reaction UMP + diphosphate = 5-phospho-alpha-D-ribose 1-diphosphate + uracil. It functions in the pathway pyrimidine metabolism; UMP biosynthesis via salvage pathway; UMP from uracil: step 1/1. Allosterically activated by GTP. Its function is as follows. Catalyzes the conversion of uracil and 5-phospho-alpha-D-ribose 1-diphosphate (PRPP) to UMP and diphosphate. The polypeptide is Uracil phosphoribosyltransferase (Synechocystis sp. (strain ATCC 27184 / PCC 6803 / Kazusa)).